Reading from the N-terminus, the 694-residue chain is Threonine--tRNA ligase (694 aa).

One can recognise a TGS domain in the interval 8–74 (NFVNTSVTTH…EETATFTAVP (67 aa)). The tract at residues 273–579 (DHRRLGTELD…LLEHYAGAFP (307 aa)) is catalytic. The Zn(2+) site is built by cysteine 378, histidine 429, and histidine 556.

Belongs to the class-II aminoacyl-tRNA synthetase family. In terms of assembly, homodimer. Zn(2+) serves as cofactor.

The protein resides in the cytoplasm. The catalysed reaction is tRNA(Thr) + L-threonine + ATP = L-threonyl-tRNA(Thr) + AMP + diphosphate + H(+). Functionally, catalyzes the attachment of threonine to tRNA(Thr) in a two-step reaction: L-threonine is first activated by ATP to form Thr-AMP and then transferred to the acceptor end of tRNA(Thr). Also edits incorrectly charged L-seryl-tRNA(Thr). The chain is Threonine--tRNA ligase from Corynebacterium efficiens (strain DSM 44549 / YS-314 / AJ 12310 / JCM 11189 / NBRC 100395).